The primary structure comprises 444 residues: Serine carboxypeptidase-like 50 (444 aa).

The N-terminal stretch at 1–22 (MEQATTLFILLSTLLLAVSVES) is a signal peptide. A disulfide bond links Cys-79 and Cys-308. Residue Ser-170 is part of the active site. The N-linked (GlcNAc...) asparagine glycan is linked to Asn-263. The active site involves Asp-345. Residue Asn-361 is glycosylated (N-linked (GlcNAc...) asparagine). His-403 is a catalytic residue.

The protein belongs to the peptidase S10 family. Ubiquitous.

It localises to the secreted. Functionally, probable carboxypeptidase. This is Serine carboxypeptidase-like 50 (SCPL50) from Arabidopsis thaliana (Mouse-ear cress).